Reading from the N-terminus, the 691-residue chain is Protein vreteno (691 aa).

A disordered region spans residues 128 to 155; it reads QKEREITSDPVTSTEPMPTPGPAISATE. Tudor domains lie at 366 to 427 and 573 to 630; these read KLQS…LAGL and APPI…FIFP.

As to quaternary structure, interacts with aub and piwi. As to expression, gonad-specific.

Its subcellular location is the cytoplasm. The protein localises to the cytoplasmic ribonucleoprotein granule. In terms of biological role, gonad-specific protein essential for germline development to repress transposable elements and preventing their mobilization, which is essential for the germline integrity. Acts via the piRNA metabolic process in both germline and somatic gonadal tissues by mediating the repression of transposable elements during meiosis. Required for primary piRNA biogenesis in both germline and somatic gonadal tissues. The sequence is that of Protein vreteno (vret) from Drosophila melanogaster (Fruit fly).